We begin with the raw amino-acid sequence, 321 residues long: tRNA(Ile)-lysidine synthase (321 aa).

Position 20 to 25 (20 to 25 (SGGADS)) interacts with ATP.

Belongs to the tRNA(Ile)-lysidine synthase family.

It localises to the cytoplasm. It carries out the reaction cytidine(34) in tRNA(Ile2) + L-lysine + ATP = lysidine(34) in tRNA(Ile2) + AMP + diphosphate + H(+). Functionally, ligates lysine onto the cytidine present at position 34 of the AUA codon-specific tRNA(Ile) that contains the anticodon CAU, in an ATP-dependent manner. Cytidine is converted to lysidine, thus changing the amino acid specificity of the tRNA from methionine to isoleucine. The protein is tRNA(Ile)-lysidine synthase of Bordetella pertussis (strain Tohama I / ATCC BAA-589 / NCTC 13251).